The sequence spans 295 residues: Aspartate carbamoyltransferase catalytic subunit (295 aa).

Arg54 and Thr55 together coordinate carbamoyl phosphate. Lys82 is an L-aspartate binding site. 3 residues coordinate carbamoyl phosphate: Arg104, His132, and Gln135. Positions 165 and 218 each coordinate L-aspartate. Residues Gly257 and Pro258 each coordinate carbamoyl phosphate.

It belongs to the aspartate/ornithine carbamoyltransferase superfamily. ATCase family. Heterododecamer (2C3:3R2) of six catalytic PyrB chains organized as two trimers (C3), and six regulatory PyrI chains organized as three dimers (R2).

The catalysed reaction is carbamoyl phosphate + L-aspartate = N-carbamoyl-L-aspartate + phosphate + H(+). It functions in the pathway pyrimidine metabolism; UMP biosynthesis via de novo pathway; (S)-dihydroorotate from bicarbonate: step 2/3. Catalyzes the condensation of carbamoyl phosphate and aspartate to form carbamoyl aspartate and inorganic phosphate, the committed step in the de novo pyrimidine nucleotide biosynthesis pathway. This Wolbachia pipientis subsp. Culex pipiens (strain wPip) protein is Aspartate carbamoyltransferase catalytic subunit.